Here is a 539-residue protein sequence, read N- to C-terminus: Alpha-aminoadipic semialdehyde dehydrogenase (539 aa).

A mitochondrion-targeting transit peptide spans 1 to 26 (MWRVPRRLCVQSVKTSKLSGPWSRPA). An N6-acetyllysine; alternate mark is found at Lys-86, Lys-94, and Lys-97. N6-succinyllysine; alternate is present on residues Lys-86, Lys-94, and Lys-97. NAD(+) contacts are provided by residues 192–194 (TAF), Lys-218, 258–259 (GT), 274–275 (GS), 274–279 (GSTQVG), and 296–297 (EL). Catalysis depends on Glu-296, which acts as the Proton acceptor. The active-site Nucleophile is Cys-330. Residue Thr-331 coordinates (S)-2-amino-6-oxohexanoate. Glu-427 serves as a coordination point for NAD(+). Lys-462 carries the post-translational modification N6-acetyllysine. Residues Gly-489 and Ala-490 each contribute to the (S)-2-amino-6-oxohexanoate site. An N6-acetyllysine modification is found at Lys-500. Lys-537 carries the post-translational modification N6-succinyllysine.

The protein belongs to the aldehyde dehydrogenase family. In terms of assembly, homotetramer. Present in liver, kidney, brain and pancreas, and at lower levels in jejunum, duodenum, stomach and testes (at protein level).

It is found in the cytoplasm. It localises to the cytosol. The protein resides in the nucleus. The protein localises to the mitochondrion. The enzyme catalyses nonanal + NAD(+) + H2O = nonanoate + NADH + 2 H(+). The catalysed reaction is (S)-2-amino-6-oxohexanoate + NAD(+) + H2O = L-2-aminoadipate + NADH + 2 H(+). It carries out the reaction betaine aldehyde + NAD(+) + H2O = glycine betaine + NADH + 2 H(+). It catalyses the reaction an aldehyde + NAD(+) + H2O = a carboxylate + NADH + 2 H(+). The enzyme catalyses hexanal + NAD(+) + H2O = hexanoate + NADH + 2 H(+). The catalysed reaction is octanal + NAD(+) + H2O = octanoate + NADH + 2 H(+). It carries out the reaction (E)-non-2-enal + NAD(+) + H2O = (E)-non-2-enoate + NADH + 2 H(+). It catalyses the reaction (E)-4-hydroxynon-2-enal + NAD(+) + H2O = (E)-4-hydroxynon-2-enoate + NADH + 2 H(+). The protein operates within amine and polyamine biosynthesis; betaine biosynthesis via choline pathway; betaine from betaine aldehyde: step 1/1. Its function is as follows. Multifunctional enzyme mediating important protective effects. Metabolizes betaine aldehyde to betaine, an important cellular osmolyte and methyl donor. Protects cells from oxidative stress by metabolizing a number of lipid peroxidation-derived aldehydes. Involved in lysine catabolism. The chain is Alpha-aminoadipic semialdehyde dehydrogenase from Mus musculus (Mouse).